Consider the following 250-residue polypeptide: MGQKSNPNGLRLGIIRTWESKWYDVDKKVPFLVGEDFKIRTLIKNHYPKSTISQIEIKRLKKSNDEFIEIDLYTSKIGIIQGPENKNKNSLINKIEKLINKKVQINIFEVKAINKIAVLVAQNIAMQLQQRAFYKAVLKSAIQKALKSGIKGIKIIITGRLGGAEKARRDSISMGVVPLNTLRADIDYAFEEAHTTYGVLGVKVIINHGEVLPNKTIADTRQIFSSQYENKKNNNKRHFVDKKNFKKSTS.

Positions 39–111 constitute a KH type-2 domain; that stretch reads IRTLIKNHYP…KVQINIFEVK (73 aa).

This sequence belongs to the universal ribosomal protein uS3 family. In terms of assembly, part of the 30S ribosomal subunit. Forms a tight complex with proteins S10 and S14.

In terms of biological role, binds the lower part of the 30S subunit head. Binds mRNA in the 70S ribosome, positioning it for translation. This is Small ribosomal subunit protein uS3 from Phytoplasma vitis (Flavescence doree phytoplasma).